A 195-amino-acid polypeptide reads, in one-letter code: NADH-quinone oxidoreductase subunit B (195 aa).

[4Fe-4S] cluster contacts are provided by cysteine 74, cysteine 75, cysteine 139, and cysteine 169.

The protein belongs to the complex I 20 kDa subunit family. As to quaternary structure, NDH-1 is composed of 14 different subunits. Subunits NuoB, C, D, E, F, and G constitute the peripheral sector of the complex. Requires [4Fe-4S] cluster as cofactor.

The protein localises to the cell inner membrane. The enzyme catalyses a quinone + NADH + 5 H(+)(in) = a quinol + NAD(+) + 4 H(+)(out). NDH-1 shuttles electrons from NADH, via FMN and iron-sulfur (Fe-S) centers, to quinones in the respiratory chain. The immediate electron acceptor for the enzyme in this species is believed to be ubiquinone. Couples the redox reaction to proton translocation (for every two electrons transferred, four hydrogen ions are translocated across the cytoplasmic membrane), and thus conserves the redox energy in a proton gradient. This chain is NADH-quinone oxidoreductase subunit B, found in Methylorubrum extorquens (strain PA1) (Methylobacterium extorquens).